A 792-amino-acid chain; its full sequence is Phenylalanine--tRNA ligase beta subunit (792 aa).

One can recognise a tRNA-binding domain in the interval 39–150; it reads GDEITNVVTG…ENTPIGKDIK (112 aa). A B5 domain is found at 404 to 479; that stretch reads SEPNIVEVDY…RIYGYNKVPS (76 aa). Positions 457, 463, 466, and 467 each coordinate Mg(2+). Residues 699 to 792 form the FDX-ACB domain; sequence PKFPTVTRDI…LEHVLGAELR (94 aa).

This sequence belongs to the phenylalanyl-tRNA synthetase beta subunit family. Type 1 subfamily. Tetramer of two alpha and two beta subunits. Requires Mg(2+) as cofactor.

It localises to the cytoplasm. It catalyses the reaction tRNA(Phe) + L-phenylalanine + ATP = L-phenylalanyl-tRNA(Phe) + AMP + diphosphate + H(+). In Clostridium acetobutylicum (strain ATCC 824 / DSM 792 / JCM 1419 / IAM 19013 / LMG 5710 / NBRC 13948 / NRRL B-527 / VKM B-1787 / 2291 / W), this protein is Phenylalanine--tRNA ligase beta subunit.